The following is a 207-amino-acid chain: Urease accessory protein UreG (207 aa).

12–19 lines the GTP pocket; the sequence is GPVGAGKT.

This sequence belongs to the SIMIBI class G3E GTPase family. UreG subfamily. Homodimer. UreD, UreF and UreG form a complex that acts as a GTP-hydrolysis-dependent molecular chaperone, activating the urease apoprotein by helping to assemble the nickel containing metallocenter of UreC. The UreE protein probably delivers the nickel.

The protein localises to the cytoplasm. Facilitates the functional incorporation of the urease nickel metallocenter. This process requires GTP hydrolysis, probably effectuated by UreG. The protein is Urease accessory protein UreG of Cereibacter sphaeroides (strain ATCC 17023 / DSM 158 / JCM 6121 / CCUG 31486 / LMG 2827 / NBRC 12203 / NCIMB 8253 / ATH 2.4.1.) (Rhodobacter sphaeroides).